Reading from the N-terminus, the 161-residue chain is Large-conductance mechanosensitive channel (161 aa).

Transmembrane regions (helical) follow at residues 21–41 (VGVIIGAAFNGIVKSLVDGVI) and 79–99 (GAFINTVIQFLIVAVVVFLLV). Residues 142 to 154 (TAAPKAAAAPVAK) show a composition bias toward low complexity. The segment at 142–161 (TAAPKAAAAPVAKPKTKPKA) is disordered.

It belongs to the MscL family. As to quaternary structure, homopentamer.

It is found in the cell inner membrane. In terms of biological role, channel that opens in response to stretch forces in the membrane lipid bilayer. May participate in the regulation of osmotic pressure changes within the cell. The protein is Large-conductance mechanosensitive channel of Caulobacter sp. (strain K31).